We begin with the raw amino-acid sequence, 181 residues long: Large ribosomal subunit protein uL5 (181 aa).

The protein belongs to the universal ribosomal protein uL5 family. In terms of assembly, part of the 50S ribosomal subunit; part of the 5S rRNA/L5/L18/L25 subcomplex. Contacts the 5S rRNA and the P site tRNA. Forms a bridge to the 30S subunit in the 70S ribosome.

This is one of the proteins that bind and probably mediate the attachment of the 5S RNA into the large ribosomal subunit, where it forms part of the central protuberance. In the 70S ribosome it contacts protein S13 of the 30S subunit (bridge B1b), connecting the 2 subunits; this bridge is implicated in subunit movement. Contacts the P site tRNA; the 5S rRNA and some of its associated proteins might help stabilize positioning of ribosome-bound tRNAs. This chain is Large ribosomal subunit protein uL5, found in Helicobacter pylori (strain HPAG1).